Consider the following 380-residue polypeptide: 1-deoxy-D-xylulose 5-phosphate reductoisomerase (380 aa).

NADPH-binding residues include Ser-10, Gly-11, Ser-12, Ile-13, Gly-36, Lys-37, Asn-38, and Asn-120. Residue Lys-121 coordinates 1-deoxy-D-xylulose 5-phosphate. Residue Glu-122 participates in NADPH binding. Asp-146 provides a ligand contact to Mn(2+). 1-deoxy-D-xylulose 5-phosphate-binding residues include Ser-147, Glu-148, Ser-172, and His-195. Residue Glu-148 coordinates Mn(2+). Gly-201 serves as a coordination point for NADPH. 4 residues coordinate 1-deoxy-D-xylulose 5-phosphate: Ser-208, Asn-213, Lys-214, and Glu-217. Position 217 (Glu-217) interacts with Mn(2+).

The protein belongs to the DXR family. Requires Mg(2+) as cofactor. It depends on Mn(2+) as a cofactor.

The catalysed reaction is 2-C-methyl-D-erythritol 4-phosphate + NADP(+) = 1-deoxy-D-xylulose 5-phosphate + NADPH + H(+). It functions in the pathway isoprenoid biosynthesis; isopentenyl diphosphate biosynthesis via DXP pathway; isopentenyl diphosphate from 1-deoxy-D-xylulose 5-phosphate: step 1/6. Its function is as follows. Catalyzes the NADPH-dependent rearrangement and reduction of 1-deoxy-D-xylulose-5-phosphate (DXP) to 2-C-methyl-D-erythritol 4-phosphate (MEP). The protein is 1-deoxy-D-xylulose 5-phosphate reductoisomerase of Bacillus cereus (strain ATCC 10987 / NRS 248).